Here is a 557-residue protein sequence, read N- to C-terminus: 6-methylpretetramide 4-monooxygenase (557 aa).

Residues 9-38 (QVLI…VIDR) and 278-288 (MRSGRCFVAGD) contribute to the FAD site. The segment at 530–557 (LPEDTAPGAGDSAGRPAPDGTRRGVTTE) is disordered.

The protein belongs to the PheA/TfdB FAD monooxygenase family. Requires FAD as cofactor.

The enzyme catalyses 6-methylpretetramide + NADPH + O2 + 2 H(+) = 4-hydroxy-6-methylpretetramide + NADP(+) + H2O. It catalyses the reaction 4-hydroxy-6-methylpretetramide + NADPH + O2 = 4-dedimethylamino-4-oxo-anhydrotetracycline + NADP(+) + H2O. It functions in the pathway antibiotic biosynthesis; oxytetracycline biosynthesis. In terms of biological role, involved in the biosynthesis of the tetracycline antibiotic, oxytetracycline. Catalyzes the double hydroxylation of 6-methylpretetramide to yield 4-keto-anhydrotetracycline, via the insertion of oxygen atoms at the C-12a and C-4 positions of 6-pretetramid. The chain is 6-methylpretetramide 4-monooxygenase from Streptomyces rimosus.